We begin with the raw amino-acid sequence, 412 residues long: Gamma-glutamyl phosphate reductase (412 aa).

This sequence belongs to the gamma-glutamyl phosphate reductase family.

The protein resides in the cytoplasm. It catalyses the reaction L-glutamate 5-semialdehyde + phosphate + NADP(+) = L-glutamyl 5-phosphate + NADPH + H(+). Its pathway is amino-acid biosynthesis; L-proline biosynthesis; L-glutamate 5-semialdehyde from L-glutamate: step 2/2. In terms of biological role, catalyzes the NADPH-dependent reduction of L-glutamate 5-phosphate into L-glutamate 5-semialdehyde and phosphate. The product spontaneously undergoes cyclization to form 1-pyrroline-5-carboxylate. The polypeptide is Gamma-glutamyl phosphate reductase (Actinobacillus pleuropneumoniae serotype 7 (strain AP76)).